The primary structure comprises 155 residues: Ribonuclease H (155 aa).

The RNase H type-1 domain occupies 1-142; it reads MLKQVEIFTD…CDELARAAAM (142 aa). Mg(2+)-binding residues include Asp10, Glu48, Asp70, and Asp134.

The protein belongs to the RNase H family. Monomer. It depends on Mg(2+) as a cofactor.

It is found in the cytoplasm. The catalysed reaction is Endonucleolytic cleavage to 5'-phosphomonoester.. Its function is as follows. Endonuclease that specifically degrades the RNA of RNA-DNA hybrids. The chain is Ribonuclease H from Salmonella paratyphi A (strain AKU_12601).